A 404-amino-acid polypeptide reads, in one-letter code: MRFLGDYKFALLTCSVIALSIYFAINVEFRFAYDSPGTRTGVKVSEKSPFDDEFMYMSIAEDIDRSYLHYDYYRESCPTAEKIIAKAIRDIYNVTPSVAPPIIRLLFHDCFIEGCDASVLLDADEAHTSEKDASPNLSLKGFDVIDAVKSELENVCPGVVSCADLLVLAAREAVLVAGGPFYPLETGRKDSAAAYRDFAEHELPAPDATLSVILQRFSFRGFNERETVSLFGAHSIGITHCTFFKNRLYNFSATGKPDPELNPGFLQELKTKCPFSVSTSSPSAPPDIGLPPSLPASDSENSYGMSSGNRNDEVIDLSYNNEGGDENFGTRYFRRLMQNKGLMSSDQQLMGSEVTEMWVRAYASDPLLFRREFAMSMMKLSSYNVLTGPLGQVRTSCSKALPRN.

The first 18 residues, 1-18, serve as a signal peptide directing secretion; the sequence is MRFLGDYKFALLTCSVIA. 4 disulfide bridges follow: Cys-77/Cys-156, Cys-110/Cys-115, Cys-162/Cys-397, and Cys-241/Cys-273. His-108 acts as the Proton acceptor in catalysis. Asp-109, Ile-112, Gly-114, Asp-116, and Ser-118 together coordinate Ca(2+). Residue Asn-136 is glycosylated (N-linked (GlcNAc...) asparagine). Pro-204 contacts substrate. His-234 contacts heme b. Ser-235 is a Ca(2+) binding site. Asn-250 is a glycosylation site (N-linked (GlcNAc...) asparagine). The disordered stretch occupies residues 276-307; it reads SVSTSSPSAPPDIGLPPSLPASDSENSYGMSS. The span at 283–294 shows a compositional bias: pro residues; the sequence is SAPPDIGLPPSL. Asp-287 is a Ca(2+) binding site. Residues 296–307 show a composition bias toward polar residues; that stretch reads ASDSENSYGMSS.

Belongs to the peroxidase family. Classical plant (class III) peroxidase subfamily. Requires heme b as cofactor. The cofactor is Ca(2+).

The protein localises to the secreted. It carries out the reaction 2 a phenolic donor + H2O2 = 2 a phenolic radical donor + 2 H2O. Removal of H(2)O(2), oxidation of toxic reductants, biosynthesis and degradation of lignin, suberization, auxin catabolism, response to environmental stresses such as wounding, pathogen attack and oxidative stress. These functions might be dependent on each isozyme/isoform in each plant tissue. The protein is Putative Peroxidase 48 (PER48) of Arabidopsis thaliana (Mouse-ear cress).